We begin with the raw amino-acid sequence, 864 residues long: N-alpha-acetyltransferase 16, NatA auxiliary subunit (864 aa).

TPR repeat units follow at residues 46-79, 80-113, 148-184, 224-257, 374-407, 408-441, and 485-514; these read GETL…DVRS, HVCW…DKDN, RASW…PPNK, LLVE…NAEN, IWVQ…TPTL, IELF…DTAD, and MWFE…VERH. Residues 594–646 are disordered; it reads KMLSKQRRAQKKAKVEEERKHTERERQQKNQKKKREEEEEVTSGHKEELIPEK. The segment covering 595 to 605 has biased composition (basic residues); that stretch reads MLSKQRRAQKK. Basic and acidic residues-rich tracts occupy residues 606-621 and 635-646; these read AKVE…ERQQ and TSGHKEELIPEK.

As to quaternary structure, component of the N-terminal acetyltransferase A (NatA) complex composed of NAA10 and NAA16. As to expression, highest levels in the kidney and testes. Moderate expression in the liver, thymus and skin.

Its function is as follows. Auxillary subunit of the N-terminal acetyltransferase A (NatA) complex which displays alpha (N-terminal) acetyltransferase activity. The polypeptide is N-alpha-acetyltransferase 16, NatA auxiliary subunit (Naa16) (Mus musculus (Mouse)).